We begin with the raw amino-acid sequence, 209 residues long: 3-demethoxyubiquinol 3-hydroxylase (209 aa).

The segment covering 23–36 (PHATRAAPAPAQAP) has biased composition (low complexity). The interval 23 to 42 (PHATRAAPAPAQAPGEMTDS) is disordered. Fe cation is bound by residues Glu58, Glu88, His91, Glu140, Glu172, and His175.

The protein belongs to the COQ7 family. The cofactor is Fe cation.

The protein localises to the cell membrane. It carries out the reaction a 5-methoxy-2-methyl-3-(all-trans-polyprenyl)benzene-1,4-diol + AH2 + O2 = a 3-demethylubiquinol + A + H2O. It functions in the pathway cofactor biosynthesis; ubiquinone biosynthesis. In terms of biological role, catalyzes the hydroxylation of 2-nonaprenyl-3-methyl-6-methoxy-1,4-benzoquinol during ubiquinone biosynthesis. The polypeptide is 3-demethoxyubiquinol 3-hydroxylase (Variovorax paradoxus (strain S110)).